Here is a 109-residue protein sequence, read N- to C-terminus: Nucleoid-associated protein VV2410 (109 aa).

The interval 1 to 22 (MFGKGGMGNLMKQAQQMQERMQ) is disordered.

The protein belongs to the YbaB/EbfC family. Homodimer.

The protein localises to the cytoplasm. It localises to the nucleoid. Binds to DNA and alters its conformation. May be involved in regulation of gene expression, nucleoid organization and DNA protection. This Vibrio vulnificus (strain YJ016) protein is Nucleoid-associated protein VV2410.